A 1530-amino-acid chain; its full sequence is Neurexin-1 (1530 aa).

Residues 1-30 (MGTALVQHGGCCLLCLSLLLLGCWAELGSG) form the signal peptide. In terms of domain architecture, Laminin G-like 1 spans 31-217 (LEFPGAEGQW…PPNSGGGSPC (187 aa)). Topologically, residues 31–1454 (LEFPGAEGQW…EVIRESSSTT (1424 aa)) are extracellular. N-linked (GlcNAc...) asparagine glycans are attached at residues asparagine 125 and asparagine 190. Residues 196–219 (PVDGSEVKLDEEPPNSGGGSPCEA) are disordered. The EGF-like 1 domain maps to 213–255 (GGSPCEAGDEGDGGVCLNGGVCSVVDDQAVCDCSRTGFRGKDC). 2 disulfide bridges follow: cysteine 228/cysteine 243 and cysteine 245/cysteine 255. Laminin G-like domains are found at residues 299-496 (IATF…AFKC) and 503-695 (DPIT…KPSC). Positions 345, 362, and 430 each coordinate Ca(2+). 5 cysteine pairs are disulfide-bonded: cysteine 460/cysteine 496, cysteine 666/cysteine 695, cysteine 703/cysteine 714, cysteine 708/cysteine 723, and cysteine 725/cysteine 735. The EGF-like 2 domain maps to 699–736 (TAKPCLSNPCKNNGMCRDGWNRYVCDCSGTGYLGRSCE). 2 consecutive Laminin G-like domains span residues 741–914 (VLSY…IDYC) and 928–1103 (DPVT…ERGC). Ca(2+) contacts are provided by aspartate 788 and leucine 805. The N-linked (GlcNAc...) asparagine glycan is linked to asparagine 813. A Ca(2+)-binding site is contributed by arginine 864. Cystine bridges form between cysteine 906–cysteine 914, cysteine 1075–cysteine 1103, cysteine 1110–cysteine 1121, cysteine 1115–cysteine 1130, and cysteine 1132–cysteine 1142. The 38-residue stretch at 1106–1143 (PSTTCQEDSCSNQGVCLQQWDGFSCDCSMTSFSGPLCN) folds into the EGF-like 3 domain. The region spanning 1149-1347 (YIFSKGGGQI…DANIAIVGNV (199 aa)) is the Laminin G-like 6 domain. Ca(2+) is bound by residues aspartate 1199 and valine 1216. An N-linked (GlcNAc...) asparagine glycan is attached at asparagine 1246. Residues isoleucine 1298 and asparagine 1300 each coordinate Ca(2+). An O-linked (Xyl...) (heparan sulfate) serine glycan is attached at serine 1408. The interval 1412 to 1443 (PSDDEDIDPCEPSSGGLANPTRVGGREPYPGS) is disordered. A helical membrane pass occupies residues 1455 to 1475 (GMVVGIVAAAALCILILLYAM). The Cytoplasmic portion of the chain corresponds to 1476–1530 (YKYRNRDEGSYHVDESRNYISNSAQSNGAVVKEKQPSSAKSANKNKKNKDKEYYV). The segment at 1497-1523 (NSAQSNGAVVKEKQPSSAKSANKNKKN) is interaction with CASK. The interval 1497–1530 (NSAQSNGAVVKEKQPSSAKSANKNKKNKDKEYYV) is disordered.

It belongs to the neurexin family. Interacts (via laminin G-like domain 2 and/or laminin G-like domain 6) with NLGN1 forming a heterotetramer, where one NLGN1 dimer interacts with one NRXN1 dimer. Also interacts (via laminin G-like domain 2 and/or laminin G-like domain 6) with NLGN2, NLGN3 and NLGN4L; interactions with NLGN1, NLGN2, NLGN3 and NLGN4L are calcium-dependent. Interacts (via cytoplasmic C-terminal region) with CASK (via the PDZ, SH3 and guanylate kinase-like domains). Interacts (via cytoplasmic C-terminus) with CASKIN1 and APBA1. Interacts (via laminin G-like domain 2) with NXPH1 and NXPH3. Alpha-type isoforms (neurexin-1-alpha) interact (via laminin G-like domain 2 and/or laminin G-like domain 6) with DAG1 (via alpha-dystroglycan chain). Interacts with LRRTM1, LRRTM2, LRRTM3 and LRRTM4. Interacts with SYT13 and SYTL1. Interacts with CBLN1, CBLN2 and, less avidly, with CBLN4. Interacts with CLSTN3. Alpha-type isoforms interact with alpha-latrotoxin from spider venom. O-glycosylated; contains heparan sulfate. Heparan sulfate attachment is required for synapse development by mediating interactions with neuroligins and LRRTM2. In terms of tissue distribution, brain (neuronal synapse).

The protein localises to the presynaptic cell membrane. Functionally, cell surface protein involved in cell-cell-interactions, exocytosis of secretory granules and regulation of signal transmission. Function is isoform-specific. Alpha-type isoforms have a long N-terminus with six laminin G-like domains and play an important role in synaptic signal transmission. Alpha-type isoforms play a role in the regulation of calcium channel activity and Ca(2+)-triggered neurotransmitter release at synapses and at neuromuscular junctions. They play an important role in Ca(2+)-triggered exocytosis of secretory granules in pituitary gland. They may affect their functions at synapses and in endocrine cells via their interactions with proteins from the exocytotic machinery. Likewise, alpha-type isoforms play a role in regulating the activity of postsynaptic NMDA receptors, a subtype of glutamate-gated ion channels. Both alpha-type and beta-type isoforms may play a role in the formation or maintenance of synaptic junctions via their interactions (via the extracellular domains) with neuroligin family members, CBLN1 or CBLN2. In vitro, triggers the de novo formation of presynaptic structures. May be involved in specification of excitatory synapses. Alpha-type isoforms were first identified as receptors for alpha-latrotoxin from spider venom. The polypeptide is Neurexin-1 (Nrxn1) (Rattus norvegicus (Rat)).